The sequence spans 147 residues: Transthyretin (147 aa).

The first 20 residues, 1 to 20 (MASRRLLLLCLAGLVLVTEA), serve as a signal peptide directing secretion. At cysteine 30 the chain carries Sulfocysteine. Lysine 35 serves as a coordination point for L-thyroxine. Glutamate 62 carries the post-translational modification 4-carboxyglutamate. Glutamate 74 provides a ligand contact to L-thyroxine. Asparagine 118 is a glycosylation site (N-linked (GlcNAc...) asparagine). Serine 137 is an L-thyroxine binding site.

It belongs to the transthyretin family. As to quaternary structure, homotetramer. Dimer of dimers. In the homotetramer, subunits assemble around a central channel that can accommodate two ligand molecules. Interacts with RBP4. In terms of processing, sulfonation of the reactive cysteine Cys-30 enhances the stability of the native conformation of TTR, avoiding misassembly of the protein leading to amyloid formation. In terms of tissue distribution, detected in serum (at protein level). Detected in liver.

It is found in the secreted. Thyroid hormone-binding protein. Probably transports thyroxine from the bloodstream to the brain. This is Transthyretin (TTR) from Sorex araneus (Eurasian common shrew).